The sequence spans 145 residues: 3-hydroxyacyl-[acyl-carrier-protein] dehydratase FabZ (145 aa).

Histidine 49 is a catalytic residue.

The protein belongs to the thioester dehydratase family. FabZ subfamily.

The protein resides in the cytoplasm. It catalyses the reaction a (3R)-hydroxyacyl-[ACP] = a (2E)-enoyl-[ACP] + H2O. Its function is as follows. Involved in unsaturated fatty acids biosynthesis. Catalyzes the dehydration of short chain beta-hydroxyacyl-ACPs and long chain saturated and unsaturated beta-hydroxyacyl-ACPs. This chain is 3-hydroxyacyl-[acyl-carrier-protein] dehydratase FabZ, found in Rickettsia bellii (strain OSU 85-389).